Here is an 843-residue protein sequence, read N- to C-terminus: Lon protease (843 aa).

Basic and acidic residues predominate over residues 1–16 (MRERKETAMSDKEKKG). Positions 1–22 (MRERKETAMSDKEKKGAGAGAQ) are disordered. In terms of domain architecture, Lon N-terminal spans 42-236 (LPILPLRNSV…LVLELLNRKR (195 aa)). 388 to 395 (GPPGVGKT) is a binding site for ATP. The region spanning 627–808 (TEIAGVATGL…DEVLQAALEE (182 aa)) is the Lon proteolytic domain. Residues serine 714 and lysine 757 contribute to the active site. Residues 805–843 (ALEENPVGRKPPAAPEPEGEKKPGATPTPPAKKPDEIRV) are disordered.

Belongs to the peptidase S16 family. Homohexamer. Organized in a ring with a central cavity.

It is found in the cytoplasm. The enzyme catalyses Hydrolysis of proteins in presence of ATP.. Functionally, ATP-dependent serine protease that mediates the selective degradation of mutant and abnormal proteins as well as certain short-lived regulatory proteins. Required for cellular homeostasis and for survival from DNA damage and developmental changes induced by stress. Degrades polypeptides processively to yield small peptide fragments that are 5 to 10 amino acids long. Binds to DNA in a double-stranded, site-specific manner. This Anaeromyxobacter dehalogenans (strain 2CP-C) protein is Lon protease.